Consider the following 374-residue polypeptide: Putative F-box/kelch-repeat protein At4g39756 (374 aa).

An F-box domain is found at 17 to 63 (CPSFLSLPEEILVNCLARIPKSYYPKLSLVCKSFCSLILSMELYVER). Kelch repeat units lie at residues 135 to 180 (ELYA…VING), 181 to 227 (KIYV…GMAV), 231 to 278 (KIYV…RQSC), and 280 to 308 (WYDT…ILEV).

The chain is Putative F-box/kelch-repeat protein At4g39756 from Arabidopsis thaliana (Mouse-ear cress).